The sequence spans 88 residues: Small ribosomal subunit protein uS19 (88 aa).

Belongs to the universal ribosomal protein uS19 family.

Its function is as follows. Protein S19 forms a complex with S13 that binds strongly to the 16S ribosomal RNA. The sequence is that of Small ribosomal subunit protein uS19 (rpsS) from Chlamydia pneumoniae (Chlamydophila pneumoniae).